Reading from the N-terminus, the 1006-residue chain is DNA polymerase (1006 aa).

This sequence belongs to the DNA polymerase type-B family. As to quaternary structure, interacts with OPG148. Component of the Uracil-DNA glycosylase(UDG)-OPG148-polymerase complex; OPG148 and OPG116/UDG form a heterodimeric processivity factor that associates with OPG071 to form the processive polymerase holoenzyme.

The enzyme catalyses DNA(n) + a 2'-deoxyribonucleoside 5'-triphosphate = DNA(n+1) + diphosphate. Its function is as follows. Catalyzes DNA synthesis. Acquires processivity by associating with a heterodimeric processivity factor comprised of the viral OPG148 and OPG116 proteins, thereby forming the DNA polymerase holoenzyme. Displays 3'- to 5' exonuclease activity. Might participate in viral DNA recombination. Does not perform OPG116/D4synthesis across an abasic site. This is DNA polymerase (OPG071) from Homo sapiens (Human).